Here is a 285-residue protein sequence, read N- to C-terminus: 4-hydroxybenzoate octaprenyltransferase (285 aa).

The next 7 helical transmembrane spans lie at 33 to 53, 93 to 113, 134 to 154, 166 to 186, 209 to 229, 233 to 253, and 265 to 285; these read FLAA…LGVV, LILF…MNTL, ITYL…PMAY, WLLF…YAMV, LMIG…GIQL, SLYN…QWLI, and FLNN…SVLI.

The protein belongs to the UbiA prenyltransferase family. Mg(2+) is required as a cofactor.

It localises to the cell inner membrane. It catalyses the reaction all-trans-octaprenyl diphosphate + 4-hydroxybenzoate = 4-hydroxy-3-(all-trans-octaprenyl)benzoate + diphosphate. The protein operates within cofactor biosynthesis; ubiquinone biosynthesis. Catalyzes the prenylation of para-hydroxybenzoate (PHB) with an all-trans polyprenyl group. Mediates the second step in the final reaction sequence of ubiquinone-8 (UQ-8) biosynthesis, which is the condensation of the polyisoprenoid side chain with PHB, generating the first membrane-bound Q intermediate 3-octaprenyl-4-hydroxybenzoate. The protein is 4-hydroxybenzoate octaprenyltransferase of Aliivibrio salmonicida (strain LFI1238) (Vibrio salmonicida (strain LFI1238)).